The primary structure comprises 377 residues: Succinyl-diaminopimelate desuccinylase (377 aa).

Position 66 (histidine 66) interacts with Zn(2+). Aspartate 68 is a catalytic residue. Residue aspartate 99 coordinates Zn(2+). Catalysis depends on glutamate 133, which acts as the Proton acceptor. Positions 134, 162, and 348 each coordinate Zn(2+).

This sequence belongs to the peptidase M20A family. DapE subfamily. As to quaternary structure, homodimer. The cofactor is Zn(2+). Requires Co(2+) as cofactor.

It catalyses the reaction N-succinyl-(2S,6S)-2,6-diaminopimelate + H2O = (2S,6S)-2,6-diaminopimelate + succinate. Its pathway is amino-acid biosynthesis; L-lysine biosynthesis via DAP pathway; LL-2,6-diaminopimelate from (S)-tetrahydrodipicolinate (succinylase route): step 3/3. Functionally, catalyzes the hydrolysis of N-succinyl-L,L-diaminopimelic acid (SDAP), forming succinate and LL-2,6-diaminopimelate (DAP), an intermediate involved in the bacterial biosynthesis of lysine and meso-diaminopimelic acid, an essential component of bacterial cell walls. This Histophilus somni (strain 129Pt) (Haemophilus somnus) protein is Succinyl-diaminopimelate desuccinylase.